The primary structure comprises 304 residues: Meiotically up-regulated gene 86 protein (304 aa).

Residues 1-12 (MSSNPSRSNSRS) are compositionally biased toward low complexity. The tract at residues 1 to 23 (MSSNPSRSNSRSKNGDLESGLKF) is disordered. 6 consecutive transmembrane segments (helical) span residues 93–113 (PAPF…LFNV), 123–143 (MVTA…SMWE), 150–170 (FGGA…SIFI), 188–208 (AIGL…LCTV), 212–232 (LAFF…ACAF), and 247–267 (VGGA…MAGL).

The protein belongs to the acetate uptake transporter (AceTr) (TC 2.A.96) family.

The protein localises to the endoplasmic reticulum membrane. Its subcellular location is the golgi apparatus. It is found in the golgi stack membrane. The protein resides in the vacuole membrane. Has a role in meiosis. This is Meiotically up-regulated gene 86 protein (mug86) from Schizosaccharomyces pombe (strain 972 / ATCC 24843) (Fission yeast).